A 686-amino-acid chain; its full sequence is METMIKSYIKKGKDAVLNTPEIERKVRDATSNDKWGPSGTQMQEISRASYNYECFPIIMGVIWKRINDPGKFWRHVYKSLLLIDYLVRNGSPQVIRDCRHHTMEIKTLVEFQYIEEEKDVGLSVRERAKQVIDLLQDDQRIKEERDKAKTNQNKYVGIGNDSRDFGYGGGSYGGGGYDSDSYGSNQRDSYGGNQRDSYGGNQRDSYGGNQRETTRRDSFNGRDEGYGNNNNNNNNNSYDSDPYSNTRAEYENYSNRAETRRNNEFGDDSNNSYNNNNNFNNNNNNNNSYNNSNNSNNSNNNNNNNNYNNSNNNSNNIQNNPNAASGGRSRPRAASGSGPSPATPNFQSSQQQQQPTLIDFSEPTPANKPMVFDPLADLASGMNNTNNNNNNNNNNSNSFGGFQSVNNNQNSFNFNNNNQQQQQQNNFLQLTQSNPQQSNNNNNNNNFFNQQPQQAQQFGQFQNSSMNKDPFAKDEFGDFAGANGNADFNPFDQQSGDFSNKNDGQQKPKDTNDPWSKKDLFDLSNLGNQNPNQSPVNNTNNNNNGNTRSQPARVANGPITSAGSTIPTMRPQPMMNQGFNGGMMNQGMGGFNQGGGMNNMNGMNQGGMNNMNGMNQGGMNQGGMGGFNQGGMNNMGGMNQGGMNNMGGMNNMGGMNSMNGMNQGGMGFNQSGANRNTNSMGSAGRF.

The 132-residue stretch at 14–145 (DAVLNTPEIE…QDDQRIKEER (132 aa)) folds into the ENTH domain. Disordered regions lie at residues 177-417 (YDSD…FNNN) and 463-571 (NSSM…TMRP). Residues 185 to 211 (NQRDSYGGNQRDSYGGNQRDSYGGNQR) show a composition bias toward polar residues. Over residues 212–225 (ETTRRDSFNGRDEG) the composition is skewed to basic and acidic residues. Polar residues predominate over residues 237–256 (SYDSDPYSNTRAEYENYSNR). 2 stretches are compositionally biased toward low complexity: residues 269–340 (SNNS…SGPS) and 383–417 (NNTN…FNNN). Residues 491–503 (FDQQSGDFSNKND) are compositionally biased toward polar residues. A compositionally biased stretch (basic and acidic residues) spans 504–521 (GQQKPKDTNDPWSKKDLF). Positions 527–547 (GNQNPNQSPVNNTNNNNNGNT) are enriched in low complexity. Positions 558–567 (PITSAGSTIP) are enriched in polar residues.

The protein belongs to the epsin family.

The protein localises to the membrane. Its subcellular location is the clathrin-coated pit. Its function is as follows. Binds to membranes enriched in phosphatidylinositol 4,5-bisphosphate (PtdIns(4,5)P2). This is Epsin (epnA) from Dictyostelium discoideum (Social amoeba).